Consider the following 438-residue polypeptide: Glutaryl-CoA dehydrogenase, mitochondrial (438 aa).

The transit peptide at 1–44 directs the protein to the mitochondrion; the sequence is MALRGVSVRLLSRGPGLHVLRTWVSSAAQTEKGGRTQSQLAKSS. Residues 138-139 and Ser186 each bind substrate; that span reads RS. FAD is bound by residues 177-186 and 212-214; these read FGLTEPNSGS and WIT. An N6-acetyllysine modification is found at Lys240. 287 to 294 is a binding site for substrate; the sequence is FGCLNNAR. FAD contacts are provided by residues Arg319, Gln330, and 387–391; that span reads DMLGG. The active-site Proton acceptor is the Glu414. Gly415 contacts substrate. FAD-binding positions include 416–418 and Phe434; that span reads THD.

This sequence belongs to the acyl-CoA dehydrogenase family. Homotetramer. FAD serves as cofactor. In terms of tissue distribution, isoform Long and isoform Short are expressed in fibroblasts and liver.

Its subcellular location is the mitochondrion matrix. The enzyme catalyses glutaryl-CoA + oxidized [electron-transfer flavoprotein] + 2 H(+) = (2E)-butenoyl-CoA + reduced [electron-transfer flavoprotein] + CO2. It functions in the pathway amino-acid metabolism; lysine degradation. It participates in amino-acid metabolism; tryptophan metabolism. Strongly inhibited by MCPA-CoA, a metabolite of hypoglycin which is present in unripened fruit of the ackee tree. Its function is as follows. Catalyzes the oxidative decarboxylation of glutaryl-CoA to crotonyl-CoA and CO(2) in the degradative pathway of L-lysine, L-hydroxylysine, and L-tryptophan metabolism. It uses electron transfer flavoprotein as its electron acceptor. Isoform Short is inactive. In Homo sapiens (Human), this protein is Glutaryl-CoA dehydrogenase, mitochondrial (GCDH).